We begin with the raw amino-acid sequence, 295 residues long: 3-methyl-2-oxobutanoate hydroxymethyltransferase (295 aa).

The tract at residues 1–30 (MTSGRAMSPEETAPYGTGPARAESAPDAPA) is disordered. Mg(2+) contacts are provided by D76 and D115. 3-methyl-2-oxobutanoate-binding positions include 76–77 (DS), D115, and K145. Mg(2+) is bound at residue E147. Catalysis depends on E213, which acts as the Proton acceptor.

Belongs to the PanB family. As to quaternary structure, homodecamer; pentamer of dimers. Requires Mg(2+) as cofactor.

The protein localises to the cytoplasm. The catalysed reaction is 3-methyl-2-oxobutanoate + (6R)-5,10-methylene-5,6,7,8-tetrahydrofolate + H2O = 2-dehydropantoate + (6S)-5,6,7,8-tetrahydrofolate. It functions in the pathway cofactor biosynthesis; (R)-pantothenate biosynthesis; (R)-pantoate from 3-methyl-2-oxobutanoate: step 1/2. In terms of biological role, catalyzes the reversible reaction in which hydroxymethyl group from 5,10-methylenetetrahydrofolate is transferred onto alpha-ketoisovalerate to form ketopantoate. In Nocardioides sp. (strain ATCC BAA-499 / JS614), this protein is 3-methyl-2-oxobutanoate hydroxymethyltransferase.